The chain runs to 124 residues: Small ribosomal subunit protein uS12 (124 aa).

D89 carries the post-translational modification 3-methylthioaspartic acid. The disordered stretch occupies residues T101–E124.

Belongs to the universal ribosomal protein uS12 family. Part of the 30S ribosomal subunit. Contacts proteins S8 and S17. May interact with IF1 in the 30S initiation complex.

Functionally, with S4 and S5 plays an important role in translational accuracy. Interacts with and stabilizes bases of the 16S rRNA that are involved in tRNA selection in the A site and with the mRNA backbone. Located at the interface of the 30S and 50S subunits, it traverses the body of the 30S subunit contacting proteins on the other side and probably holding the rRNA structure together. The combined cluster of proteins S8, S12 and S17 appears to hold together the shoulder and platform of the 30S subunit. This Synechococcus sp. (strain CC9902) protein is Small ribosomal subunit protein uS12.